Consider the following 176-residue polypeptide: Major non-capsid protein (176 aa).

The protein belongs to the tenuiviruses NCP family.

The protein localises to the host cytoplasm. Its function is as follows. Induces the formation of large intracellular inclusion body, organized in amorphous and crystalline arrays. Presumably the main cause of the stripe disease observed in host. This Rottboellia (Sorghum) protein is Major non-capsid protein.